The following is a 394-amino-acid chain: Elongation factor Tu (394 aa).

One can recognise a tr-type G domain in the interval 10–204 (KPHINVGTIG…YLDTYIPEPK (195 aa)). The G1 stretch occupies residues 19–26 (GHVDHGKT). Position 19–26 (19–26 (GHVDHGKT)) interacts with GTP. Residue Thr26 coordinates Mg(2+). Residues 60–64 (GITIN) are G2. Residues 81-84 (DCPG) are G3. Residues 81-85 (DCPGH) and 136-139 (NKCD) contribute to the GTP site. Residues 136 to 139 (NKCD) are G4. A G5 region spans residues 174–176 (SAL).

This sequence belongs to the TRAFAC class translation factor GTPase superfamily. Classic translation factor GTPase family. EF-Tu/EF-1A subfamily. In terms of assembly, monomer.

The protein localises to the cytoplasm. The enzyme catalyses GTP + H2O = GDP + phosphate + H(+). Functionally, GTP hydrolase that promotes the GTP-dependent binding of aminoacyl-tRNA to the A-site of ribosomes during protein biosynthesis. This Buchnera aphidicola subsp. Baizongia pistaciae (strain Bp) protein is Elongation factor Tu.